The following is a 353-amino-acid chain: Biotin synthase (353 aa).

Positions 1–22 (MTACSTTPTTSATSAQPAAGSP) are enriched in low complexity. Residues 1 to 30 (MTACSTTPTTSATSAQPAAGSPLQWHARPS) form a disordered region. One can recognise a Radical SAM core domain in the interval 72–299 (GDIELATLLS…TARVRLSAGR (228 aa)). [4Fe-4S] cluster is bound by residues Cys-87, Cys-91, and Cys-94. Residues Cys-131, Cys-162, Cys-222, and Arg-294 each contribute to the [2Fe-2S] cluster site.

It belongs to the radical SAM superfamily. Biotin synthase family. In terms of assembly, homodimer. Requires [4Fe-4S] cluster as cofactor. [2Fe-2S] cluster serves as cofactor.

It carries out the reaction (4R,5S)-dethiobiotin + (sulfur carrier)-SH + 2 reduced [2Fe-2S]-[ferredoxin] + 2 S-adenosyl-L-methionine = (sulfur carrier)-H + biotin + 2 5'-deoxyadenosine + 2 L-methionine + 2 oxidized [2Fe-2S]-[ferredoxin]. It participates in cofactor biosynthesis; biotin biosynthesis; biotin from 7,8-diaminononanoate: step 2/2. Its function is as follows. Catalyzes the conversion of dethiobiotin (DTB) to biotin by the insertion of a sulfur atom into dethiobiotin via a radical-based mechanism. This Delftia acidovorans (strain DSM 14801 / SPH-1) protein is Biotin synthase.